We begin with the raw amino-acid sequence, 369 residues long: Core-capsid bridging protein (369 aa).

Positions 15–50 are disordered; it reads APEIYGPPKKEEQDYKPRKLKRVKKKKKDDDDDELD. Residues 22 to 31 show a composition bias toward basic and acidic residues; it reads PKKEEQDYKP. Residues 32 to 41 are compositionally biased toward basic residues; sequence RKLKRVKKKK. The residue at position 85 (T85) is a Phosphothreonine; by host. Position 166 is a phosphoserine; by host (S166). Residues 307-342 form a disordered region; sequence PGYRGYTYRPRRRATTRRRTTTGTRRRRRRRQPVLA. Residues 315–338 show a composition bias toward basic residues; the sequence is RPRRRATTRRRTTTGTRRRRRRRQ.

It belongs to the adenoviridae core-capsid bridging protein family. Monomer. Homodimer. Exists in equilibrium between monomers and dimers in solution. Interacts with the histone-like nucleoprotein; this interactions bridge the virus core to the capsid. Interacts with core protein X; this interactions bridge the virus core to the capsid. Interacts with the endosome lysis protein VI; this interactions bridge the virus core to the capsid. Interacts with the peripentonal hexons. Interacts with host NPM1; this interaction might play a role in virus assembly.

It localises to the virion. The protein resides in the host nucleus. The protein localises to the host nucleolus. Functionally, associates loosely with the viral DNA to form an outer shell around the nucleoprotein-DNA complex and links it with the capsid by binding the endosome lysis protein. Dissociates from the viral genome during entry. Might be involved in nuclear capsid assembly of the viral particles through its association with NPM1/nucleophosmin. The polypeptide is Core-capsid bridging protein (Homo sapiens (Human)).